The chain runs to 463 residues: Chromosomal replication initiator protein DnaA (463 aa).

The interval 1–83 (MSTNQIILTD…LQLFQHYNNT (83 aa)) is domain I, interacts with DnaA modulators. A domain II region spans residues 83–124 (TIKSIEIITKELPGTTQTVTELPTKTFADIGSSELNSENIFS). The segment at 125–343 (TLDVRFTFDN…GALNKVIAHS (219 aa)) is domain III, AAA+ region. Residues G171, G173, K174, and T175 each coordinate ATP. A domain IV, binds dsDNA region spans residues 344–463 (NFTLKEITLE…IHLLMKILQN (120 aa)).

It belongs to the DnaA family. Oligomerizes as a right-handed, spiral filament on DNA at oriC.

Its subcellular location is the cytoplasm. Its function is as follows. Plays an essential role in the initiation and regulation of chromosomal replication. ATP-DnaA binds to the origin of replication (oriC) to initiate formation of the DNA replication initiation complex once per cell cycle. Binds the DnaA box (a 9 base pair repeat at the origin) and separates the double-stranded (ds)DNA. Forms a right-handed helical filament on oriC DNA; dsDNA binds to the exterior of the filament while single-stranded (ss)DNA is stabiized in the filament's interior. The ATP-DnaA-oriC complex binds and stabilizes one strand of the AT-rich DNA unwinding element (DUE), permitting loading of DNA polymerase. After initiation quickly degrades to an ADP-DnaA complex that is not apt for DNA replication. Binds acidic phospholipids. The protein is Chromosomal replication initiator protein DnaA of Rickettsia africae (strain ESF-5).